A 425-amino-acid polypeptide reads, in one-letter code: Histone-binding protein RBBP7 (425 aa).

An N-acetylalanine modification is found at Ala2. Residue Ser3 is modified to Phosphoserine. Residue Lys4 is modified to N6-acetyllysine; alternate. Residue Lys4 forms a Glycyl lysine isopeptide (Lys-Gly) (interchain with G-Cter in SUMO2); alternate linkage. Residue Lys4 forms a Glycyl lysine isopeptide (Lys-Gly) (interchain with G-Cter in ubiquitin); alternate linkage. Thr10 bears the Phosphothreonine mark. A phosphoserine mark is found at Glu13 and Ser95. 7 WD repeats span residues 47 to 122 (QWLP…KINH), 128 to 173 (RARY…LRLR), 181 to 217 (GLSWNSNLSGHLLSASDDHTVCLWDINAGPKEGKIVD), 228 to 269 (VVED…HLVD), 275 to 312 (VNCLSFNPYSEFILATGSADKTVALWDLRNLKLKLHTF), 318 to 369 (EIFQ…LFIH), and 376 to 403 (ISDFSWNPNEPWVICSVSEDNIMQIWQM). A Glycyl lysine isopeptide (Lys-Gly) (interchain with G-Cter in SUMO2) cross-link involves residue Lys101. Position 119 is an N6-acetyllysine (Lys119). A Glycyl lysine isopeptide (Lys-Gly) (interchain with G-Cter in SUMO2) cross-link involves residue Lys155. Lys159 carries the N6-acetyllysine; alternate modification. Residue Lys159 forms a Glycyl lysine isopeptide (Lys-Gly) (interchain with G-Cter in SUMO2); alternate linkage. The residue at position 354 (Ser354) is a Phosphoserine.

It belongs to the WD repeat RBAP46/RBAP48/MSI1 family. Binds directly to helix 1 of the histone fold of histone H4, a region that is not accessible when H4 is in chromatin. Subunit of the type B histone acetyltransferase (HAT) complex, composed of RBBP7 and HAT1. Subunit of the core histone deacetylase (HDAC) complex, which is composed of HDAC1, HDAC2, RBBP4 and RBBP7. The core HDAC complex associates with SIN3A, ARID4B/SAP180, SAP18, SAP30, SAP130, SUDS3/SAP45 and possibly ARID4A/RBP1 and ING1 to form the SIN3 HDAC complex. Component of the nucleosome remodeling and deacetylase (NuRD) repressor complex, composed of core proteins MTA1, MTA2, MTA3, RBBP4, RBBP7, HDAC1, HDAC2, MBD2, MBD3, and peripherally associated proteins CDK2AP1, CDK2AP2, GATAD2A, GATAD2B, CHD3, CHD4 and CHD5. The exact stoichiometry of the NuRD complex is unknown, and some subunits such as MBD2 and MBD3, GATAD2A and GATAD2B, and CHD3, CHD4 and CHD5 define mutually exclusive NuRD complexes. The NuRD complex may interact with MBD3L1. The NuRD complex may interact with MBD3L2. Subunit of the PRC2/EED-EZH2 complex, which is composed of at least EED, EZH2, RBBP4, RBBP7 and SUZ12. The PRC2/EED-EZH2 complex may also associate with HDAC1. Component of the NURF-1 ISWI chromatin remodeling complex (also called the nucleosome-remodeling factor (NURF) complex) at least composed of SMARCA1 (isoform 2), BPTF, RBBP4 and RBBP7. Within the complex interacts with isoform 2 of SMARCA1. Component of the BPFT-SMARCA1 complex at least composed of SMARCA1 (isoform 1), BPFT, RBBP4 and RBBP7; the complex is catalytically inactive and does not remodel chromatin. Within the complex interacts with isoform 1 of SMARCA1. Interacts with BRCA1. Interacts with CDK2AP1. Interacts with CENPA. Interacts with CHD3. Interacts with CHD4. Interacts with CREBBP, and this interaction may be enhanced by the binding of phosphorylated CREB1 to CREBBP. Interacts with HDAC7. Interacts with MTA1. Interacts with PWWP2B. Interacts with RB1 (via viral protein-binding domain). Interacts with SUV39H1.

The protein localises to the nucleus. Its function is as follows. Core histone-binding subunit that may target chromatin remodeling factors, histone acetyltransferases and histone deacetylases to their histone substrates in a manner that is regulated by nucleosomal DNA. Component of several complexes which regulate chromatin metabolism. These include the type B histone acetyltransferase (HAT) complex, which is required for chromatin assembly following DNA replication; the core histone deacetylase (HDAC) complex, which promotes histone deacetylation and consequent transcriptional repression; the nucleosome remodeling and histone deacetylase complex (the NuRD complex), which promotes transcriptional repression by histone deacetylation and nucleosome remodeling; and the PRC2/EED-EZH2 complex, which promotes repression of homeotic genes during development; and the NURF (nucleosome remodeling factor) complex. The protein is Histone-binding protein RBBP7 (RBBP7) of Homo sapiens (Human).